The following is a 105-amino-acid chain: Small ribosomal subunit protein uS10 (105 aa).

This sequence belongs to the universal ribosomal protein uS10 family. In terms of assembly, part of the 30S ribosomal subunit.

Functionally, involved in the binding of tRNA to the ribosomes. This chain is Small ribosomal subunit protein uS10, found in Trichormus variabilis (strain ATCC 29413 / PCC 7937) (Anabaena variabilis).